The following is a 217-amino-acid chain: GTPase IMAP family member GIMD1 (217 aa).

The region spanning 6–217 (KMIINLALFG…ENCYQVLTFK (212 aa)) is the AIG1-type G domain. Residues 15–23 (GMTQSGKSS), S36, and 148–150 (HAE) contribute to the GTP site.

The protein belongs to the TRAFAC class TrmE-Era-EngA-EngB-Septin-like GTPase superfamily. AIG1/Toc34/Toc159-like paraseptin GTPase family. IAN subfamily.

The protein is GTPase IMAP family member GIMD1 (GIMD1) of Homo sapiens (Human).